The following is a 3332-amino-acid chain: Nonribosomal peptide synthetase imqB (3332 aa).

The tract at residues 230–622 is adenylation 1; the sequence is FSEQVKAHPG…IGRKDTQVKV (393 aa). Positions 764-846 constitute a Carrier 1 domain; sequence GRITPQEKLL…DMARCITRVD (83 aa). The residue at position 801 (Ser801) is an O-(pantetheine 4'-phosphoryl)serine. The tract at residues 886 to 1314 is condensation 1; it reads DIYPCTPLQE…NCLTRKELHQ (429 aa). The segment at 1336–1740 is adenylation 2; sequence EVSNTRPTAP…GRKDRQLKVR (405 aa). The 75-residue stretch at 1880–1954 folds into the Carrier 2 domain; the sequence is AIATPKEEKL…EMAEKAAETG (75 aa). The residue at position 1915 (Ser1915) is an O-(pantetheine 4'-phosphoryl)serine. Positions 1992–2402 are condensation 2; it reads EDIYPCTPLQ…CLSEIDTQQI (411 aa). The tract at residues 2422–2819 is adenylation 3; the sequence is AQQAREHPAT…GRKDTQVKIR (398 aa). The Carrier 3 domain occupies 2963 to 3039; it reads EVATNDEAAV…DLASRIGRVE (77 aa). Ser3000 carries the O-(pantetheine 4'-phosphoryl)serine modification. Positions 3058–3323 are thioesterase (TE) domain; sequence SSNPTLIQGQ…ETTRHIRDFC (266 aa).

Belongs to the NRP synthetase family.

It participates in secondary metabolite biosynthesis. Nonribosomal peptide synthetase; part of the gene cluster that mediates the biosynthesis of imizoquins A to D, tripeptide-derived alkaloids that serve a protective role against oxidative stress that are essential for normal germination. ImqB is a canonical three-module NRPS that assembles the tripeptide backbone of the imizoquins via condensation of Trp, Tyr, and Leu-derived precursors. N-methylation by imqF and phenol oxidation by imqC, followed by cyclization via the FAD-dependent oxidase imqH carry out the three-step transformation of L-tyrosine into tetrahydroisoquinoline. Importantly, this sequence requires the presence of a free amine in the tyrosine moiety, indicating that isoquinoline formation occurs prior to peptide bond formation. The imidazolidin-4-one ring of imizoquins could form following additional oxidation of the methyl-derived bridgehead carbon by imqH. Lastly, O-methylation by imqG and leucine hydroxylation by imqE complete biosynthesis of the imizoquins. The chain is Nonribosomal peptide synthetase imqB from Aspergillus flavus (strain ATCC 200026 / FGSC A1120 / IAM 13836 / NRRL 3357 / JCM 12722 / SRRC 167).